The sequence spans 194 residues: MPSAEQTSWVILAGGQASRMGGNDKGLVELTGKAMIEHVIGTLSPQTSSITINANRNQERYSQYGSVFGDNIQDYPGPLGGIHAAIHHLDDEWIGFVPCDCPQLPHDLVERMANACSEDTDIAVAHDGEHIQPVVTLLHRRILPKLEAFLANGDRKIILLYRQCNMITVDFSDQPNAFVNLNTPEELQQFGQTL.

Residues 12–14 (LAG), K25, N53, D70, and D100 each bind GTP. D100 contributes to the Mg(2+) binding site.

This sequence belongs to the MobA family. In terms of assembly, monomer. Mg(2+) is required as a cofactor.

The protein resides in the cytoplasm. The enzyme catalyses Mo-molybdopterin + GTP + H(+) = Mo-molybdopterin guanine dinucleotide + diphosphate. Transfers a GMP moiety from GTP to Mo-molybdopterin (Mo-MPT) cofactor (Moco or molybdenum cofactor) to form Mo-molybdopterin guanine dinucleotide (Mo-MGD) cofactor. The sequence is that of Molybdenum cofactor guanylyltransferase from Photobacterium profundum (strain SS9).